A 100-amino-acid chain; its full sequence is Small ribosomal subunit protein uS14c (100 aa).

Belongs to the universal ribosomal protein uS14 family. In terms of assembly, part of the 30S ribosomal subunit.

It is found in the plastid. The protein resides in the chloroplast. Functionally, binds 16S rRNA, required for the assembly of 30S particles. The sequence is that of Small ribosomal subunit protein uS14c from Cycas taitungensis (Prince sago).